The chain runs to 319 residues: Large ribosomal subunit protein uL10 (319 aa).

Residues 286–319 (AGDSGASAAPKEEEKAAEPEEESDEEMGFSLFDD) are disordered. Residues 304–319 (PEEESDEEMGFSLFDD) show a composition bias toward acidic residues.

Belongs to the universal ribosomal protein uL10 family. As to quaternary structure, P0 forms a pentameric complex by interaction with dimers of P1 and P2. Phosphorylated.

Ribosomal protein P0 is the functional equivalent of E.coli protein L10. This chain is Large ribosomal subunit protein uL10 (RP-P0), found in Zea mays (Maize).